The primary structure comprises 323 residues: NADH-ubiquinone oxidoreductase chain 1 (323 aa).

8 helical membrane passes run 8–28 (VINP…LTLL), 74–94 (FLFL…WAPM), 105–125 (LGVL…LGSG), 145–165 (ISYE…TGGF), 176–196 (SIWL…STLA), 236–256 (ILLM…IPAF), 258–278 (ELTA…FLWV), and 298–318 (FLPL…ALAG).

This sequence belongs to the complex I subunit 1 family.

The protein localises to the mitochondrion inner membrane. It carries out the reaction a ubiquinone + NADH + 5 H(+)(in) = a ubiquinol + NAD(+) + 4 H(+)(out). In terms of biological role, core subunit of the mitochondrial membrane respiratory chain NADH dehydrogenase (Complex I) that is believed to belong to the minimal assembly required for catalysis. Complex I functions in the transfer of electrons from NADH to the respiratory chain. The immediate electron acceptor for the enzyme is believed to be ubiquinone. The protein is NADH-ubiquinone oxidoreductase chain 1 (MT-ND1) of Oncorhynchus mykiss (Rainbow trout).